Reading from the N-terminus, the 220-residue chain is ATP synthase subunit beta, chloroplastic (220 aa).

The protein belongs to the ATPase alpha/beta chains family. In terms of assembly, F-type ATPases have 2 components, CF(1) - the catalytic core - and CF(0) - the membrane proton channel. CF(1) has five subunits: alpha(3), beta(3), gamma(1), delta(1), epsilon(1). CF(0) has four main subunits: a(1), b(1), b'(1) and c(9-12).

The protein resides in the plastid. It localises to the chloroplast thylakoid membrane. The enzyme catalyses ATP + H2O + 4 H(+)(in) = ADP + phosphate + 5 H(+)(out). Produces ATP from ADP in the presence of a proton gradient across the membrane. The catalytic sites are hosted primarily by the beta subunits. The polypeptide is ATP synthase subunit beta, chloroplastic (atpB) (Osmundastrum cinnamomeum (Cinnamon fern)).